Reading from the N-terminus, the 246-residue chain is Uridylate kinase (246 aa).

20–23 (KISG) contacts ATP. Positions 28–33 (GDQGYG) are involved in allosteric activation by GTP. Glycine 62 lines the UMP pocket. Residues glycine 63 and arginine 67 each contribute to the ATP site. UMP-binding positions include aspartate 82 and 143–150 (TGNPYFTT). ATP is bound by residues threonine 170, tyrosine 176, and aspartate 179.

It belongs to the UMP kinase family. In terms of assembly, homohexamer.

It is found in the cytoplasm. The catalysed reaction is UMP + ATP = UDP + ADP. Its pathway is pyrimidine metabolism; CTP biosynthesis via de novo pathway; UDP from UMP (UMPK route): step 1/1. Allosterically activated by GTP. Inhibited by UTP. Its function is as follows. Catalyzes the reversible phosphorylation of UMP to UDP. This chain is Uridylate kinase, found in Cereibacter sphaeroides (strain ATCC 17023 / DSM 158 / JCM 6121 / CCUG 31486 / LMG 2827 / NBRC 12203 / NCIMB 8253 / ATH 2.4.1.) (Rhodobacter sphaeroides).